We begin with the raw amino-acid sequence, 118 residues long: Putative cytochrome P450 family member 4F30 (118 aa).

Residues 1–64 (MVTPAGCLGG…GPLHILGTDG (64 aa)) form a disordered region. The span at 28–43 (RAGQTGQAVSGAQVSS) shows a compositional bias: polar residues.

The chain is Putative cytochrome P450 family member 4F30 (CYP4F30P) from Homo sapiens (Human).